The chain runs to 138 residues: MRALWIVAVLLVGVEGSLLQFNKMIKFETRKNAVPFYAFYGCYCGWGGQGRPKDATDRCCFVHDCCYGKLAKCNTKWDIYRYSLKSGYITCGKGTWCKEQICECDRVAAECLRRSLSTYKNEYMFYPDSRCREPSETC.

Residues 1–16 (MRALWIVAVLLVGVEG) form the signal peptide. 7 cysteine pairs are disulfide-bonded: Cys-42–Cys-131, Cys-44–Cys-60, Cys-59–Cys-111, Cys-65–Cys-138, Cys-66–Cys-104, Cys-73–Cys-97, and Cys-91–Cys-102. Ca(2+) is bound by residues Tyr-43, Gly-45, and Gly-47. His-63 is a catalytic residue. Ca(2+) is bound at residue Asp-64. Asp-105 is an active-site residue.

It belongs to the phospholipase A2 family. Group II subfamily. D49 sub-subfamily. Heterodimer of one of the acidic (CA1, CA2, CA3 or CA4) and one of the basic (CBa1, CBa2, CBb, CBc or CBd) subunits; non-covalently linked. The acidic subunit is non-toxic, without enzymatic activity and comprises 3 peptides that are cross-linked by 5 disulfide bridges. The basic subunit is toxic, has phospholipase A2 activity and is composed of a single chain. Multiple variants of each subunit give different crotoxin complexes that can be subdivided into 2 classes: (1) those of high toxicity, low PLA2 activity (CBb, CBc and CBd linked with high affinity to any CA) and high stability (K(d)=4.5 nM) and (2) those of moderate toxicity, high PLA2 activity (CBa2 linked with low affinity to any CA) and low stability (K(d)=25 nM). Interacts with human NBD1 domain of CFTR. Ca(2+) serves as cofactor. In terms of tissue distribution, expressed by the venom gland.

It is found in the secreted. It carries out the reaction a 1,2-diacyl-sn-glycero-3-phosphocholine + H2O = a 1-acyl-sn-glycero-3-phosphocholine + a fatty acid + H(+). In terms of biological role, heterodimer CA-CB: Crotoxin is a potent presynaptic neurotoxin that possesses phospholipase A2 (PLA2) activity and exerts a lethal action by blocking neuromuscular transmission. It consists of a non-covalent association of a basic and weakly toxic PLA2 subunit (CBa2, CBb, CBc, or CBd), with a small acidic, non-enzymatic and non-toxic subunit (CA1, CA2, CA3 or CA4). The complex acts by binding to a specific 48-kDa protein (R48) receptor located on presynaptic membranes, forming a transient ternary complex CA-CB-R48, followed by dissociation of the CA-CB complex and release of the CA subunit. At equilibrium, only the CB subunits remain associated with the specific crotoxin receptor. In addition to neurotoxicity, crotoxin has been found to exert myotoxicity, nephrotoxicity, and cardiovascular toxicity. Moreover, anti-inflammatory, immunomodulatory, anti-tumor and analgesic effects of crotoxin have also been reported. Its function is as follows. Monomer CBa2: The basic subunit of crotoxin is a snake venom phospholipase A2 (PLA2) that exhibits weak neurotoxicity (10-fold less than the heterodimer) and strong anticoagulant effects by binding to factor Xa (F10) and inhibiting the prothrombinase activity (IC(50) is 41 nM). In addition, it shows the same effects described for the heterodimer and binds the nucleotide-binding domain (NBD1) of CFTR chloride channels and increases the channel current. PLA2 catalyzes the calcium-dependent hydrolysis of the 2-acyl groups in 3-sn-phosphoglycerides. The polypeptide is Phospholipase A2 crotoxin basic chain CBa2 (Crotalus durissus terrificus (South American rattlesnake)).